Consider the following 208-residue polypeptide: Uracil phosphoribosyltransferase (208 aa).

Residues arginine 78, arginine 103, and 130–138 (DPMLATGGS) each bind 5-phospho-alpha-D-ribose 1-diphosphate. Residues isoleucine 193 and 198-200 (GDA) contribute to the uracil site. Aspartate 199 provides a ligand contact to 5-phospho-alpha-D-ribose 1-diphosphate.

The protein belongs to the UPRTase family. Mg(2+) is required as a cofactor.

It carries out the reaction UMP + diphosphate = 5-phospho-alpha-D-ribose 1-diphosphate + uracil. The protein operates within pyrimidine metabolism; UMP biosynthesis via salvage pathway; UMP from uracil: step 1/1. With respect to regulation, allosterically activated by GTP. Functionally, catalyzes the conversion of uracil and 5-phospho-alpha-D-ribose 1-diphosphate (PRPP) to UMP and diphosphate. In Mannheimia succiniciproducens (strain KCTC 0769BP / MBEL55E), this protein is Uracil phosphoribosyltransferase.